The following is a 370-amino-acid chain: Fe(2+) transport protein 2 (370 aa).

Positions 1–25 are cleaved as a signal peptide; sequence MMMSSSQTPVRIAFVFLVILAATDA. The Extracellular portion of the chain corresponds to 26 to 55; that stretch reads HSDHRTPPPACGGAAVGGECHSVARALRLK. Residues 56-76 traverse the membrane as a helical segment; sequence LIAIPAILAASVAGVCLPLFA. At 77–85 the chain is on the cytoplasmic side; it reads RSVPALRPD. A helical membrane pass occupies residues 86–106; that stretch reads GGLFAVVKAFASGVILGTGYM. The Extracellular segment spans residues 107 to 130; sequence HVLPDSFNDLTSPCLPRKPWSEFP. The chain crosses the membrane as a helical span at residues 131–151; it reads FAAFVAMLAAVFTLMVDSLML. Residues 152-215 lie on the Cytoplasmic side of the membrane; that stretch reads TFHTRGSKGR…TTKAQLLRNR (64 aa). The chain crosses the membrane as a helical span at residues 216-236; sequence VIVQVLEMGIVVHSVVIGLGM. The Extracellular segment spans residues 237-247; it reads GASQNVCTIRP. The helical transmembrane segment at 248–268 threads the bilayer; it reads LVAALCFHQMFEGMGLGGCIL. Over 269 to 278 the chain is Cytoplasmic; it reads QAGYGGRTRS. Residues 279–299 traverse the membrane as a helical segment; that stretch reads ALVFFFSTTTPFGIALGLALT. Residues 300–309 are Extracellular-facing; the sequence is RVYSDSSPTA. Residues 310 to 330 traverse the membrane as a helical segment; that stretch reads LVVVGLLNAASAGLLHYMALV. Residues 331–349 are Cytoplasmic-facing; sequence ELLAADFMGPKLQGNVRLQ. A helical membrane pass occupies residues 350–370; it reads LAASLAILLGAGGMSVMAKWA.

Belongs to the ZIP transporter (TC 2.A.5) family.

Its subcellular location is the cell membrane. Iron transporter that may play a role in the uptake of iron from the rhizosphere across the plasma membrane in the root epidermal layer. This is Fe(2+) transport protein 2 (IRT2) from Oryza sativa subsp. japonica (Rice).